The primary structure comprises 588 residues: Solute carrier family 2, facilitated glucose transporter member 12 (588 aa).

The Cytoplasmic segment spans residues 1-28; the sequence is MLAHSTAQDLILQQRSSDDHPQTNPRQT. The chain crosses the membrane as a helical span at residues 29-49; it reads GCGAFIILSSVIAAISGLLVG. Topologically, residues 50-74 are extracellular; sequence YELGIISGALLQLQSLLELTCQQQE. Residues 75–95 traverse the membrane as a helical segment; it reads IVVSALLIGALVASLVGGCLI. Topologically, residues 96–103 are cytoplasmic; the sequence is DLYGRRTT. The helical transmembrane segment at 104–124 threads the bilayer; sequence IIFTSILLVFANLLPVVVVSY. Topologically, residues 125 to 131 are extracellular; the sequence is GSLIAGR. The chain crosses the membrane as a helical span at residues 132-152; the sequence is IFIGVSISLSAIATCVYIAEL. At 153–158 the chain is on the cytoplasmic side; the sequence is SPQDKR. A helical transmembrane segment spans residues 159-179; the sequence is GMLVSLNELMIVAGILLAYIC. Topologically, residues 180–191 are extracellular; the sequence is NYLFASVNNGWK. A helical membrane pass occupies residues 192–212; the sequence is YMFGLITPLAALQAVAMFFLP. Residues 213 to 272 are Cytoplasmic-facing; that stretch reads RSPRFLIMKGYDDAAGKVLQKLRATTDINEELTAIKSSIKAEYQYKFLDLFCSRDNMRAR. The helical transmembrane segment at 273 to 293 threads the bilayer; it reads LLIGLTLSFFVQITGQPNILF. Residues 294–311 are Extracellular-facing; it reads YASTVLKSVGFQSTEAAS. A helical transmembrane segment spans residues 312–332; the sequence is LASTGIGVVKVVSTIPAIFLV. Topologically, residues 333 to 339 are cytoplasmic; that stretch reads DKIGSKT. The chain crosses the membrane as a helical span at residues 340 to 360; it reads FLCIGSAVMAVSLVSVGLVSL. Over 361–459 the chain is Extracellular; the sequence is QLDVNYNNIC…IPEYMKWLCL (99 aa). N-linked (GlcNAc...) asparagine glycans are attached at residues N377, N395, and N419. A helical membrane pass occupies residues 460–480; it reads SSLLAFVAAFSIGLGPMAWLV. The Cytoplasmic portion of the chain corresponds to 481 to 492; the sequence is QSEIFPAGIKGR. Residues 493–513 traverse the membrane as a helical segment; sequence AFAITSSMNWGMNLLISLTFL. The Extracellular segment spans residues 514–522; the sequence is TLTEMIGLP. The helical transmembrane segment at 523-543 threads the bilayer; it reads WMLFGYALMSIASLVFVIMFV. The Cytoplasmic portion of the chain corresponds to 544–588; the sequence is PNTKGRPLEEISKELANRSYMCNAVCHRRRSKKKLTPVALIQSPA.

This sequence belongs to the major facilitator superfamily. Sugar transporter (TC 2.A.1.1) family. Glucose transporter subfamily.

The protein localises to the cell membrane. It is found in the endomembrane system. The protein resides in the cytoplasm. It localises to the perinuclear region. The catalysed reaction is D-glucose(out) = D-glucose(in). Its function is as follows. Insulin-regulated facilitative glucose transporter. The polypeptide is Solute carrier family 2, facilitated glucose transporter member 12 (Xenopus laevis (African clawed frog)).